The primary structure comprises 486 residues: tRNA (uracil-5-)-methyltransferase homolog B (486 aa).

S-adenosyl-L-methionine is bound by residues Q305, E355, and N405. C433 acts as the Nucleophile in catalysis. E479 (proton acceptor) is an active-site residue.

The protein belongs to the class I-like SAM-binding methyltransferase superfamily. RNA M5U methyltransferase family.

The protein resides in the mitochondrion matrix. The catalysed reaction is uridine(54) in tRNA + S-adenosyl-L-methionine = 5-methyluridine(54) in tRNA + S-adenosyl-L-homocysteine + H(+). It carries out the reaction a uridine in 12S rRNA + S-adenosyl-L-methionine = a 5-methyluridine in 12S rRNA + S-adenosyl-L-homocysteine + H(+). Its function is as follows. Mitochondrial S-adenosyl-L-methionine-dependent methyltransferase that catalyzes the formation of 5-methyl-uridine in tRNAs and 12S rRNA. Catalyzes the methylation of uridine at position 54 (m5U54) in all tRNAs. Specifically methylates the uridine in position 429 of 12S rRNA (m5U429). Does not affect RNA stability or mitochondrial translation. This Pongo abelii (Sumatran orangutan) protein is tRNA (uracil-5-)-methyltransferase homolog B (TRMT2B).